Reading from the N-terminus, the 762-residue chain is Probable disease resistance protein At1g61300 (762 aa).

Gly-2 carries N-myristoyl glycine lipidation. S-palmitoyl cysteine attachment occurs at residues Cys-3 and Cys-4. An NB-ARC domain is found at 26–329 (NINRNSFGVE…CEGFIGEDQV (304 aa)). 68–75 (GMGGVGKT) contacts ATP. 5 LRR repeats span residues 401–422 (AVRRMSLMDNHIEEITCESKCS), 423–444 (ELTTLFLQSNQLKNLSGEFIRY), 447–470 (KLVVLDLSYNRDFNKLPEQISGLV), 471–493 (SLQFLDLSNTSIKQLPVGLKKLK), and 494–516 (KLTFLNLAYTVRLCSISGISRLL).

Belongs to the disease resistance NB-LRR family.

It is found in the cell membrane. Its function is as follows. Probable disease resistance protein. In Arabidopsis thaliana (Mouse-ear cress), this protein is Probable disease resistance protein At1g61300.